Reading from the N-terminus, the 1368-residue chain is MQYSFTEKKRIRKSFAKRPIVHQVPFLLATQLESFSTFLQADVPGTQRKPEGLQAAFTSVFPIVSHNGFARLEFVSYALSSPAFNIKECQQRGLTYCSALRAKVRLVILDKESPNKPVVKEVKEQEVYMGEIPLMTPTGSFVINGTERVIVSQLHRSPGVFFEHDKGKTHSSGKLLFSARIIPYRGSWLDFEFDPKDILYFRVDRRRKMPVTILLKAIGLTPEQILANFFVFDNFTLMDEGAQLEFVPERLRGEVARFDITDRDGKVIVQKDKRINAKHIRDLEAAKTKFISVPEDYLLGRVLAKNVVDGDTGEVIASANDEVTESVLEKLREAGIKEIQTLYTNDLDQGPYISSTLRVDETTDKTAARIAIYRMMRPGEPPTEEAVEALFNRLFYSEEAYDLSKVGRMKFNRRVGRDEITGPMTLQDDDILATIKILVELRNGKGEVDDIDHLGNRRVRCVGELAENQFRAGLVRVERAVKERLGQAESENLMPHDLINSKPISSAIREFFGSSQLSQFMDQTNPLSEITHKRRVSALGPGGLTRERAGFEVRDVHPTHYGRVCPIETPEGPNIGLINSLALYAHLNEYGFLETPYRKVVDSKVTDQIDYLSAIEEGRYMIAQANAAIDENGQLVDELVSSREAGETMMVTPDRIQYMDVAPSQIVSVAASLIPFLEHDDANRALMGSNMQRQAVPCLRPEKPVVGTGIERTCAVDSGTTVQAFRGGVVDYVDAGRIVIRVNDDEAVAGEVGVDIYNLIKYTRSNQNTNINQRPIVKMGDKVSRGDVLADGASTDLGELALGQNMLIAFMPWNGYNFEDSILISEKVVADDRYTSIHIEELNVVARDTKLGPEEITRDISNLAEVQLGRLDESGIVYIGAEVEAGDVLVGKVTPKGETQLTPEEKLLRAIFGEKASDVKDTSLRVPSGMSGTVIDVQVFTREGIQRDKRAQQIIDDELKRYRLDLNDQLRIVEGDAFQRLARMLVGKVANGGPKKLAKGTKIDQAYLEDLDHYHWFDIRLADDEAAAQLEAIKNSIEEKRHQFDLAFEEKRKKLTQGDELPPGVLKMVKVYLAVKRRLQPGDKMAGRHGNKGVVSKIVPIEDMPYMADGRPADVVLNPLGVPSRMNVGQVLEVHLGWAAKGLGWRIGEMLQRQAKIEEMRSFLTKIYNDSGRKEDLESFTDDEILELAKNLREGVPFATPVFDGATEEEMGKMLDLAFPDDIAEQLGMNPSKNQVRLYDGRTGEMFERRVTLGYMHYLKLHHLVDDKMHARSTGPYSLVTQQPLGGKAQFGGQRFGEMEVWALEAYGASYVLQEMLTVKSDDVNGRTKVYENLVKGDHVIDAGMPESFNVLVKEIRSLGIDIDLDRN.

Belongs to the RNA polymerase beta chain family. In terms of assembly, the RNAP catalytic core consists of 2 alpha, 1 beta, 1 beta' and 1 omega subunit. When a sigma factor is associated with the core the holoenzyme is formed, which can initiate transcription.

The catalysed reaction is RNA(n) + a ribonucleoside 5'-triphosphate = RNA(n+1) + diphosphate. DNA-dependent RNA polymerase catalyzes the transcription of DNA into RNA using the four ribonucleoside triphosphates as substrates. This is DNA-directed RNA polymerase subunit beta from Burkholderia ambifaria (strain ATCC BAA-244 / DSM 16087 / CCUG 44356 / LMG 19182 / AMMD) (Burkholderia cepacia (strain AMMD)).